The chain runs to 234 residues: Large ribosomal subunit protein uL1 (234 aa).

This sequence belongs to the universal ribosomal protein uL1 family. In terms of assembly, part of the 50S ribosomal subunit.

In terms of biological role, binds directly to 23S rRNA. The L1 stalk is quite mobile in the ribosome, and is involved in E site tRNA release. Its function is as follows. Protein L1 is also a translational repressor protein, it controls the translation of the L11 operon by binding to its mRNA. In Baumannia cicadellinicola subsp. Homalodisca coagulata, this protein is Large ribosomal subunit protein uL1.